The sequence spans 348 residues: Tetraacyldisaccharide 4'-kinase (348 aa).

An ATP-binding site is contributed by 65–72; the sequence is VAGGAGKT. Residues 89–117 form a disordered region; that stretch reads PGIVSRGHGSREREARPVSADSTAQSVGD.

Belongs to the LpxK family.

It carries out the reaction a lipid A disaccharide + ATP = a lipid IVA + ADP + H(+). It functions in the pathway glycolipid biosynthesis; lipid IV(A) biosynthesis; lipid IV(A) from (3R)-3-hydroxytetradecanoyl-[acyl-carrier-protein] and UDP-N-acetyl-alpha-D-glucosamine: step 6/6. Transfers the gamma-phosphate of ATP to the 4'-position of a tetraacyldisaccharide 1-phosphate intermediate (termed DS-1-P) to form tetraacyldisaccharide 1,4'-bis-phosphate (lipid IVA). The protein is Tetraacyldisaccharide 4'-kinase of Leptothrix cholodnii (strain ATCC 51168 / LMG 8142 / SP-6) (Leptothrix discophora (strain SP-6)).